The sequence spans 243 residues: Protein unc-119 homolog B (243 aa).

A compositionally biased stretch (polar residues) spans 1 to 21 (MNSQSSRNETAATAVNGSDSA). Residues 1–49 (MNSQSSRNETAATAVNGSDSAAASRDHKSGGGVLKRLKSRRNQVDRRPV) form a disordered region. Residue Y134 participates in tetradecanoate binding.

Belongs to the PDE6D/unc-119 family. In terms of tissue distribution, detected in embryo. Detected in larvae four days after fertilization, in retina and neural tissues (at protein level). Detected in embryos at the sphere stage, during gastrulation, somitogenesis and in swimming larvae, both within and outside of the developing nervous system. Detected in adults.

The protein resides in the cell projection. Its subcellular location is the cilium. Functionally, myristoyl-binding protein that acts as a cargo adapter: specifically binds the myristoyl moiety of a subset of N-terminally myristoylated proteins and is required for their localization. Plays a key role in localization of proteins to the primary cilium membrane. This Danio rerio (Zebrafish) protein is Protein unc-119 homolog B (unc119b).